Here is a 260-residue protein sequence, read N- to C-terminus: Phosphate import ATP-binding protein PstB 1 (260 aa).

The ABC transporter domain occupies 13–255; that stretch reads ISARDLNVHY…PQHPLTQGYI (243 aa). 45–52 contributes to the ATP binding site; it reads GPSGCGKS.

Belongs to the ABC transporter superfamily. Phosphate importer (TC 3.A.1.7) family. The complex is composed of two ATP-binding proteins (PstB), two transmembrane proteins (PstC and PstA) and a solute-binding protein (PstS).

It is found in the cell inner membrane. The enzyme catalyses phosphate(out) + ATP + H2O = ADP + 2 phosphate(in) + H(+). Its function is as follows. Part of the ABC transporter complex PstSACB involved in phosphate import. Responsible for energy coupling to the transport system. The protein is Phosphate import ATP-binding protein PstB 1 of Paramagnetospirillum magneticum (strain ATCC 700264 / AMB-1) (Magnetospirillum magneticum).